A 147-amino-acid chain; its full sequence is uncharacterized protein (147 aa).

This is an uncharacterized protein from Mycobacterium tuberculosis (strain CDC 1551 / Oshkosh).